The sequence spans 183 residues: Helofensin-2 (183 aa).

Positions Met-1–Gly-26 are cleaved as a signal peptide. One copy of the C(6)C(4)C(9)C(6)CC 1; approximate repeat lies at Ala-27 to Ala-64. The C(6)C(4)C(9)C(6)CC 2; approximate repeat unit spans residues Arg-65–Gln-101. The stretch at Arg-102–Lys-139 is one C(6)C(4)C(9)C(6)CC 3; approximate repeat. Residues Arg-140–Lys-177 form a C(6)C(4)C(9)C(6)CC 4; approximate repeat.

The protein belongs to the beta-defensin family. Helofensin subfamily. As to expression, expressed by the mandibular venom gland.

It localises to the secreted. Its function is as follows. Lethal toxin which possesses an inhibitory effect on direct electrical stimulation of the isolated hemi-diaphragm of mice. Neither hemorrhagic nor hemolytic activities are detected. Phospholipase A2 activity, proteolytic activity and arginine esterolytic activity are absent. In Heloderma suspectum cinctum (Banded Gila monster), this protein is Helofensin-2.